A 778-amino-acid chain; its full sequence is Probable potassium transporter 13 (778 aa).

The Cytoplasmic portion of the chain corresponds to methionine 1–leucine 28. The chain crosses the membrane as a helical span at residues leucine 29–valine 49. The Extracellular portion of the chain corresponds to tyrosine 50–serine 72. Residues leucine 73–alanine 93 traverse the membrane as a helical segment. The Cytoplasmic segment spans residues aspartate 94 to arginine 156. Residues valine 157–threonine 177 traverse the membrane as a helical segment. The Extracellular segment spans residues proline 178 to asparagine 199. N-linked (GlcNAc...) asparagine glycosylation occurs at asparagine 199. The chain crosses the membrane as a helical span at residues tyrosine 200–threonine 220. Residues arginine 221–arginine 222 lie on the Cytoplasmic side of the membrane. Residues valine 223 to isoleucine 243 form a helical membrane-spanning segment. Over tyrosine 244–serine 276 the chain is Extracellular. Residues leucine 277–phenylalanine 297 form a helical membrane-spanning segment. Residues serine 298–arginine 303 are Cytoplasmic-facing. The helical transmembrane segment at leucine 304 to tyrosine 324 threads the bilayer. The Extracellular portion of the chain corresponds to leucine 325–arginine 343. A helical transmembrane segment spans residues valine 344–isoleucine 364. Over serine 365–glutamine 395 the chain is Cytoplasmic. The helical transmembrane segment at isoleucine 396–phenylalanine 416 threads the bilayer. Over arginine 417–asparagine 424 the chain is Extracellular. The chain crosses the membrane as a helical span at residues alanine 425–isoleucine 445. Over threonine 446–arginine 451 the chain is Cytoplasmic. The helical transmembrane segment at tryptophan 452–serine 472 threads the bilayer. At alanine 473–lysine 477 the chain is on the extracellular side. A helical transmembrane segment spans residues valine 478–threonine 498. Over tryptophan 499–valine 778 the chain is Cytoplasmic. Polar residues predominate over residues proline 655–cysteine 677. The interval proline 655 to glutamate 704 is disordered.

It belongs to the HAK/KUP transporter (TC 2.A.72.3) family.

It localises to the membrane. Functionally, high-affinity potassium transporter. This Oryza sativa subsp. japonica (Rice) protein is Probable potassium transporter 13 (HAK13).